Consider the following 115-residue polypeptide: Probable non-functional T cell receptor beta variable 7-1 (115 aa).

Positions 1–21 (MGTRLLCWAAICLLGADHTGA) are cleaved as a signal peptide. Residues 22–115 (GVSQSLRHKV…LAVYLCASSS (94 aa)) form the Ig-like domain.

In terms of assembly, most probably, the alpha-beta TR is not assembled due to incorrect folding of the beta chain. Alpha-beta TR is a heterodimer composed of an alpha and beta chain; disulfide-linked. The alpha-beta TR is associated with the transmembrane signaling CD3 coreceptor proteins to form the TR-CD3 (TcR or TCR). The assembly of alpha-beta TR heterodimers with CD3 occurs in the endoplasmic reticulum where a single alpha-beta TR heterodimer associates with one CD3D-CD3E heterodimer, one CD3G-CD3E heterodimer and one CD247 homodimer forming a stable octameric structure. CD3D-CD3E and CD3G-CD3E heterodimers preferentially associate with TR alpha and TR beta chains, respectively. The association of the CD247 homodimer is the last step of TcR assembly in the endoplasmic reticulum and is required for transport to the cell surface.

Its subcellular location is the cell membrane. Its function is as follows. Probable non-functional open reading frame (ORF) of V region of the variable domain of T cell receptor (TR) beta chain. Non-functional ORF generally cannot participate in the synthesis of a productive T cell receptor (TR) chain due to altered V-(D)-J or switch recombination and/or splicing site (at mRNA level) and/or conserved amino acid change (protein level). Alpha-beta T cell receptors are antigen specific receptors which are essential to the immune response and are present on the cell surface of T lymphocytes. Recognize peptide-major histocompatibility (MH) (pMH) complexes that are displayed by antigen presenting cells (APC), a prerequisite for efficient T cell adaptive immunity against pathogens. Binding of alpha-beta TR to pMH complex initiates TR-CD3 clustering on the cell surface and intracellular activation of LCK that phosphorylates the ITAM motifs of CD3G, CD3D, CD3E and CD247 enabling the recruitment of ZAP70. In turn ZAP70 phosphorylates LAT, which recruits numerous signaling molecules to form the LAT signalosome. The LAT signalosome propagates signal branching to three major signaling pathways, the calcium, the mitogen-activated protein kinase (MAPK) kinase and the nuclear factor NF-kappa-B (NF-kB) pathways, leading to the mobilization of transcription factors that are critical for gene expression and essential for T cell growth and differentiation. The T cell repertoire is generated in the thymus, by V-(D)-J rearrangement. This repertoire is then shaped by intrathymic selection events to generate a peripheral T cell pool of self-MH restricted, non-autoaggressive T cells. Post-thymic interaction of alpha-beta TR with the pMH complexes shapes TR structural and functional avidity. The sequence is that of Probable non-functional T cell receptor beta variable 7-1 from Homo sapiens (Human).